A 339-amino-acid chain; its full sequence is Phosphoribosylformylglycinamidine cyclo-ligase (339 aa).

It belongs to the AIR synthase family.

The protein localises to the cytoplasm. It carries out the reaction 2-formamido-N(1)-(5-O-phospho-beta-D-ribosyl)acetamidine + ATP = 5-amino-1-(5-phospho-beta-D-ribosyl)imidazole + ADP + phosphate + H(+). Its pathway is purine metabolism; IMP biosynthesis via de novo pathway; 5-amino-1-(5-phospho-D-ribosyl)imidazole from N(2)-formyl-N(1)-(5-phospho-D-ribosyl)glycinamide: step 2/2. This Desulfitobacterium hafniense (strain DSM 10664 / DCB-2) protein is Phosphoribosylformylglycinamidine cyclo-ligase.